Consider the following 148-residue polypeptide: MSMGAQEPRNIFLLCRNCGISFEDLRLCCVFCTKQLTVAELTAFALRELNLVWKAGVPYGACARCLLLQGIARRLKYWQYSYYVEGVEEETKESINTQQIRCYTCHKPLVKEEKDRHRNERRRLHKISGYWRGCCAYCWTRCTVRIPQ.

2 zinc fingers span residues 29 to 65 (CVFC…CARC) and 102 to 138 (CYTC…CAYC).

Belongs to the papillomaviridae E6 protein family. Forms homodimers. Interacts with ubiquitin-protein ligase UBE3A/E6-AP; this interaction stimulates UBE3A ubiquitin activity. Interacts with host TP53 and EP300; this interaction inhibits TP53 activity.

It is found in the host cytoplasm. The protein resides in the host nucleus. Plays a major role in the induction and maintenance of cellular transformation. E6 associates with host UBE3A/E6-AP ubiquitin-protein ligase and modulates its activity. Sequesters tumor suppressor TP53 in the host cytoplasm and modulates its activity by interacting with host EP300 that results in the reduction of TP53 acetylation and activation. In turn, apoptosis induced by DNA damage is inhibited. E6 also protects host keratinocytes from apoptosis by mediating the degradation of host BAK1. May also inhibit host immune response. The polypeptide is Protein E6 (Homo sapiens (Human)).